The following is a 100-amino-acid chain: Urease subunit gamma (100 aa).

Belongs to the urease gamma subunit family. In terms of assembly, heterotrimer of UreA (gamma), UreB (beta) and UreC (alpha) subunits. Three heterotrimers associate to form the active enzyme.

Its subcellular location is the cytoplasm. It carries out the reaction urea + 2 H2O + H(+) = hydrogencarbonate + 2 NH4(+). It participates in nitrogen metabolism; urea degradation; CO(2) and NH(3) from urea (urease route): step 1/1. The chain is Urease subunit gamma from Pseudomonas entomophila (strain L48).